Reading from the N-terminus, the 325-residue chain is Probable NADH kinase (325 aa).

It belongs to the NAD kinase family. In terms of assembly, homodimer.

The protein resides in the cytoplasm. It carries out the reaction NADH + ATP = ADP + NADPH + H(+). Functionally, key source of the cellular reductant NADPH which is an important antioxidant factor. This is Probable NADH kinase from Oryza sativa subsp. japonica (Rice).